Reading from the N-terminus, the 471-residue chain is G2/mitotic-specific cyclin-1 (471 aa).

It belongs to the cyclin family. Cyclin AB subfamily.

Functionally, essential for the control of the cell cycle at the G2/M (mitosis) transition. Interacts with the CDC2 protein kinase to form MPF. G2/M cyclins accumulate steadily during G2 and are abruptly destroyed at mitosis. In Saccharomyces cerevisiae (strain ATCC 204508 / S288c) (Baker's yeast), this protein is G2/mitotic-specific cyclin-1 (CLB1).